Here is a 69-residue protein sequence, read N- to C-terminus: Cytochrome c oxidase subunit 8A, mitochondrial (69 aa).

Residues M1–K25 constitute a mitochondrion transit peptide. Positions S2–L19 match the SIFI-degron motif. The Mitochondrial matrix portion of the chain corresponds to V26–G36. A helical transmembrane segment spans residues T37–S60. Topologically, residues H61–E69 are mitochondrial intermembrane.

This sequence belongs to the cytochrome c oxidase VIII family. As to quaternary structure, component of the cytochrome c oxidase (complex IV, CIV), a multisubunit enzyme composed of 14 subunits. The complex is composed of a catalytic core of 3 subunits MT-CO1, MT-CO2 and MT-CO3, encoded in the mitochondrial DNA, and 11 supernumerary subunits COX4I, COX5A, COX5B, COX6A, COX6B, COX6C, COX7A, COX7B, COX7C, COX8 and NDUFA4, which are encoded in the nuclear genome. The complex exists as a monomer or a dimer and forms supercomplexes (SCs) in the inner mitochondrial membrane with NADH-ubiquinone oxidoreductase (complex I, CI) and ubiquinol-cytochrome c oxidoreductase (cytochrome b-c1 complex, complex III, CIII), resulting in different assemblies (supercomplex SCI(1)III(2)IV(1) and megacomplex MCI(2)III(2)IV(2)). In response to mitochondrial stress, the precursor protein is ubiquitinated by the SIFI complex in the cytoplasm before mitochondrial import, leading to its degradation. Within the SIFI complex, UBR4 initiates ubiquitin chain that are further elongated or branched by KCMF1.

It localises to the mitochondrion inner membrane. It participates in energy metabolism; oxidative phosphorylation. In terms of biological role, component of the cytochrome c oxidase, the last enzyme in the mitochondrial electron transport chain which drives oxidative phosphorylation. The respiratory chain contains 3 multisubunit complexes succinate dehydrogenase (complex II, CII), ubiquinol-cytochrome c oxidoreductase (cytochrome b-c1 complex, complex III, CIII) and cytochrome c oxidase (complex IV, CIV), that cooperate to transfer electrons derived from NADH and succinate to molecular oxygen, creating an electrochemical gradient over the inner membrane that drives transmembrane transport and the ATP synthase. Cytochrome c oxidase is the component of the respiratory chain that catalyzes the reduction of oxygen to water. Electrons originating from reduced cytochrome c in the intermembrane space (IMS) are transferred via the dinuclear copper A center (CU(A)) of subunit 2 and heme A of subunit 1 to the active site in subunit 1, a binuclear center (BNC) formed by heme A3 and copper B (CU(B)). The BNC reduces molecular oxygen to 2 water molecules using 4 electrons from cytochrome c in the IMS and 4 protons from the mitochondrial matrix. The polypeptide is Cytochrome c oxidase subunit 8A, mitochondrial (COX8A) (Papio anubis (Olive baboon)).